Reading from the N-terminus, the 574-residue chain is Serine/threonine-protein kinase fray1 (574 aa).

Residues 24–41 (NHHDLPDSDSDSSSREEE) show a composition bias toward basic and acidic residues. The tract at residues 24-64 (NHHDLPDSDSDSSSREEELMNSSGGGNGKEPIGEKKKLPSH) is disordered. The region spanning 97-357 (YNLIEPIGEG…ASKLLEHKVF (261 aa)) is the Protein kinase domain. ATP is bound by residues 103–111 (IGEGTEGRV) and lysine 126. Aspartate 221 acts as the Proton acceptor in catalysis. Threonine 256 carries the phosphothreonine; by autocatalysis modification. Disordered regions lie at residues 381-447 (YRES…LVNM), 462-514 (LSSG…PEKE), and 532-554 (FGSP…HEHH). 3 stretches are compositionally biased toward low complexity: residues 386–403 (SPAS…PSSP), 418–441 (KNIK…NLSN), and 462–475 (LSSG…SSDL). A compositionally biased stretch (basic residues) spans 478-491 (GHLHKIGTPKKKHS). Low complexity predominate over residues 492–506 (PSGSIGDSHGSISPP). The segment covering 536–553 (KEGDHNHQHHKSEGDHEH) has biased composition (basic and acidic residues).

It belongs to the protein kinase superfamily. STE Ser/Thr protein kinase family. STE20 subfamily. Mn(2+) is required as a cofactor. In terms of processing, undergoes autophosphorylation in the catalytic domain.

It carries out the reaction L-seryl-[protein] + ATP = O-phospho-L-seryl-[protein] + ADP + H(+). It catalyses the reaction L-threonyl-[protein] + ATP = O-phospho-L-threonyl-[protein] + ADP + H(+). The polypeptide is Serine/threonine-protein kinase fray1 (Dictyostelium discoideum (Social amoeba)).